A 317-amino-acid polypeptide reads, in one-letter code: Beta-ketoacyl-[acyl-carrier-protein] synthase III (317 aa).

Catalysis depends on residues cysteine 112 and histidine 244. Residues 245–249 (QANIR) are ACP-binding. Asparagine 274 is an active-site residue.

The protein belongs to the thiolase-like superfamily. FabH family. As to quaternary structure, homodimer.

It is found in the cytoplasm. It carries out the reaction malonyl-[ACP] + acetyl-CoA + H(+) = 3-oxobutanoyl-[ACP] + CO2 + CoA. The protein operates within lipid metabolism; fatty acid biosynthesis. In terms of biological role, catalyzes the condensation reaction of fatty acid synthesis by the addition to an acyl acceptor of two carbons from malonyl-ACP. Catalyzes the first condensation reaction which initiates fatty acid synthesis and may therefore play a role in governing the total rate of fatty acid production. Possesses both acetoacetyl-ACP synthase and acetyl transacylase activities. Its substrate specificity determines the biosynthesis of branched-chain and/or straight-chain of fatty acids. The polypeptide is Beta-ketoacyl-[acyl-carrier-protein] synthase III (Rickettsia massiliae (strain Mtu5)).